The following is a 111-amino-acid chain: Cell division protein FtsB (111 aa).

Residues 1–3 (MGK) lie on the Cytoplasmic side of the membrane. The helical transmembrane segment at 4-21 (LTLLLLILLGWLQYSLWL) threads the bilayer. Residues 22-111 (GKNGIHDYVR…TNTSSNNTQR (90 aa)) are Periplasmic-facing. Residues 33-63 (KDDVVVQQGNNAKLKDRNEQLFAEIDDLNGG) are a coiled coil. The tract at residues 88 to 111 (VPESNHRNANTPSSTNTSSNNTQR) is disordered. Over residues 97-111 (NTPSSTNTSSNNTQR) the composition is skewed to low complexity.

The protein belongs to the FtsB family. As to quaternary structure, part of a complex composed of FtsB, FtsL and FtsQ.

The protein resides in the cell inner membrane. In terms of biological role, essential cell division protein. May link together the upstream cell division proteins, which are predominantly cytoplasmic, with the downstream cell division proteins, which are predominantly periplasmic. In Pectobacterium atrosepticum (strain SCRI 1043 / ATCC BAA-672) (Erwinia carotovora subsp. atroseptica), this protein is Cell division protein FtsB.